Consider the following 243-residue polypeptide: tRNA pseudouridine synthase A (243 aa).

Aspartate 53 (nucleophile) is an active-site residue. Tyrosine 111 is a binding site for substrate.

The protein belongs to the tRNA pseudouridine synthase TruA family. As to quaternary structure, homodimer.

It catalyses the reaction uridine(38/39/40) in tRNA = pseudouridine(38/39/40) in tRNA. Formation of pseudouridine at positions 38, 39 and 40 in the anticodon stem and loop of transfer RNAs. The sequence is that of tRNA pseudouridine synthase A from Chlorobium phaeovibrioides (strain DSM 265 / 1930) (Prosthecochloris vibrioformis (strain DSM 265)).